Consider the following 100-residue polypeptide: Small ribosomal subunit protein uS14c (100 aa).

The protein belongs to the universal ribosomal protein uS14 family. In terms of assembly, part of the 30S ribosomal subunit.

The protein resides in the plastid. Its subcellular location is the chloroplast. Binds 16S rRNA, required for the assembly of 30S particles. In Chloranthus spicatus (Chulantree), this protein is Small ribosomal subunit protein uS14c.